The chain runs to 234 residues: HTH-type transcriptional repressor FabR (234 aa).

The HTH tetR-type domain maps to 29–89 (KTRRSLVEAA…TMVDESGLML (61 aa)). The segment at residues 52-71 (SLREVAREAGIAPTSFYRHF) is a DNA-binding region (H-T-H motif).

In terms of assembly, homodimer.

The protein localises to the cytoplasm. Has been suggested to require either an unsaturated acyl carrier protein or unsaturated acyl-CoA (but not their saturated equivalents) for DNA-binding. Another group suggests that unsaturated thioesters are not essential but act instead to enhance DNA-binding. In terms of biological role, binds the promoter region of at least fabA and fabB, but probably not yqfA. Represses the transcription of fabA and fabB, involved in unsaturated fatty acid (UFA) biosynthesis. By controlling UFA production, FabR directly influences the physical properties of the membrane bilayer. This is HTH-type transcriptional repressor FabR from Escherichia coli (strain K12).